A 752-amino-acid polypeptide reads, in one-letter code: Sialidase 85-1.1 (752 aa).

A signal peptide spans 1–23 (MSRRVFASAVLLLIVVTMCCGGA). BNR repeat units lie at residues 274 to 285 (IYSKDNGSTWSL) and 319 to 330 (YVSRDMGTTWTE). Residues 693 to 725 (APEPQVKIAPKPAAPAAPAGNEETARETGDGGA) form a disordered region. Residues 701–711 (APKPAAPAAPA) show a composition bias toward low complexity.

Belongs to the glycosyl hydrolase 33 family.

It carries out the reaction Hydrolysis of alpha-(2-&gt;3)-, alpha-(2-&gt;6)-, alpha-(2-&gt;8)- glycosidic linkages of terminal sialic acid residues in oligosaccharides, glycoproteins, glycolipids, colominic acid and synthetic substrates.. In terms of biological role, developmentally regulated neuraminidase implicated in parasite invasion of cells. May contribute to the pathology during T.cruzi infection by cleaving sialic acid from cells of the immune system. The protein is Sialidase 85-1.1 (SA85-1.1) of Trypanosoma cruzi.